The primary structure comprises 1348 residues: Phosphoribosylformylglycinamidine synthase (1348 aa).

Residues 300–311 and Ala-701 contribute to the ATP site; that span reads GAATGAGGEIRD. Residues Asp-702, Glu-741, Asn-745, and Asp-941 each contribute to the Mg(2+) site. Ser-943 is an ATP binding site. Residues 1099–1348 form the Glutamine amidotransferase type-1 domain; that stretch reads VAILREQGVN…MFRNARVWCG (250 aa). Cys-1192 functions as the Nucleophile in the catalytic mechanism. Active-site residues include His-1313 and Glu-1315.

It in the N-terminal section; belongs to the FGAMS family. As to quaternary structure, monomer.

Its subcellular location is the cytoplasm. The catalysed reaction is N(2)-formyl-N(1)-(5-phospho-beta-D-ribosyl)glycinamide + L-glutamine + ATP + H2O = 2-formamido-N(1)-(5-O-phospho-beta-D-ribosyl)acetamidine + L-glutamate + ADP + phosphate + H(+). The protein operates within purine metabolism; IMP biosynthesis via de novo pathway; 5-amino-1-(5-phospho-D-ribosyl)imidazole from N(2)-formyl-N(1)-(5-phospho-D-ribosyl)glycinamide: step 1/2. In terms of biological role, phosphoribosylformylglycinamidine synthase involved in the purines biosynthetic pathway. Catalyzes the ATP-dependent conversion of formylglycinamide ribonucleotide (FGAR) and glutamine to yield formylglycinamidine ribonucleotide (FGAM) and glutamate. This is Phosphoribosylformylglycinamidine synthase from Xanthomonas axonopodis pv. citri (strain 306).